Reading from the N-terminus, the 392-residue chain is Enoyl-[acyl-carrier-protein] reductase [NADH] (392 aa).

Residues 48–53 (GCSTGY), 74–75 (FE), 111–112 (DA), and 139–140 (LA) each bind NAD(+). Residue Tyr-225 coordinates substrate. The active-site Proton donor is Tyr-235. NAD(+)-binding positions include Lys-244 and 273–275 (LVT).

Belongs to the TER reductase family. As to quaternary structure, monomer.

It catalyses the reaction a 2,3-saturated acyl-[ACP] + NAD(+) = a (2E)-enoyl-[ACP] + NADH + H(+). It functions in the pathway lipid metabolism; fatty acid biosynthesis. Involved in the final reduction of the elongation cycle of fatty acid synthesis (FAS II). Catalyzes the reduction of a carbon-carbon double bond in an enoyl moiety that is covalently linked to an acyl carrier protein (ACP). The polypeptide is Enoyl-[acyl-carrier-protein] reductase [NADH] (Idiomarina loihiensis (strain ATCC BAA-735 / DSM 15497 / L2-TR)).